The primary structure comprises 153 residues: Ribosome maturation factor RimP (153 aa).

This sequence belongs to the RimP family.

The protein localises to the cytoplasm. Its function is as follows. Required for maturation of 30S ribosomal subunits. In Coxiella burnetii (strain Dugway 5J108-111), this protein is Ribosome maturation factor RimP.